The chain runs to 518 residues: Glutamate--cysteine ligase (518 aa).

This sequence belongs to the glutamate--cysteine ligase type 1 family. Type 1 subfamily.

It catalyses the reaction L-cysteine + L-glutamate + ATP = gamma-L-glutamyl-L-cysteine + ADP + phosphate + H(+). Its pathway is sulfur metabolism; glutathione biosynthesis; glutathione from L-cysteine and L-glutamate: step 1/2. This chain is Glutamate--cysteine ligase, found in Shigella sonnei (strain Ss046).